Here is an 81-residue protein sequence, read N- to C-terminus: Small ribosomal subunit protein bS16 (81 aa).

It belongs to the bacterial ribosomal protein bS16 family.

In Caldicellulosiruptor saccharolyticus (strain ATCC 43494 / DSM 8903 / Tp8T 6331), this protein is Small ribosomal subunit protein bS16.